A 486-amino-acid polypeptide reads, in one-letter code: tRNA sulfurtransferase (486 aa).

In terms of domain architecture, THUMP spans 63–167 (DAFAERLGCI…HEKLYMVVRR (105 aa)). Residues 185–186 (LI), Lys267, Gly289, and Gln298 contribute to the ATP site. Residues Cys346 and Cys460 are joined by a disulfide bond. Positions 408–486 (VDTQEVVIDI…GYTNVKVYRP (79 aa)) constitute a Rhodanese domain. The active-site Cysteine persulfide intermediate is Cys460.

It belongs to the ThiI family.

It localises to the cytoplasm. It carries out the reaction [ThiI sulfur-carrier protein]-S-sulfanyl-L-cysteine + a uridine in tRNA + 2 reduced [2Fe-2S]-[ferredoxin] + ATP + H(+) = [ThiI sulfur-carrier protein]-L-cysteine + a 4-thiouridine in tRNA + 2 oxidized [2Fe-2S]-[ferredoxin] + AMP + diphosphate. The enzyme catalyses [ThiS sulfur-carrier protein]-C-terminal Gly-Gly-AMP + S-sulfanyl-L-cysteinyl-[cysteine desulfurase] + AH2 = [ThiS sulfur-carrier protein]-C-terminal-Gly-aminoethanethioate + L-cysteinyl-[cysteine desulfurase] + A + AMP + 2 H(+). The protein operates within cofactor biosynthesis; thiamine diphosphate biosynthesis. In terms of biological role, catalyzes the ATP-dependent transfer of a sulfur to tRNA to produce 4-thiouridine in position 8 of tRNAs, which functions as a near-UV photosensor. Also catalyzes the transfer of sulfur to the sulfur carrier protein ThiS, forming ThiS-thiocarboxylate. This is a step in the synthesis of thiazole, in the thiamine biosynthesis pathway. The sulfur is donated as persulfide by IscS. This Shewanella denitrificans (strain OS217 / ATCC BAA-1090 / DSM 15013) protein is tRNA sulfurtransferase.